A 275-amino-acid polypeptide reads, in one-letter code: MEMO1 family protein Nmar_0215 (275 aa).

This sequence belongs to the MEMO1 family.

This Nitrosopumilus maritimus (strain SCM1) protein is MEMO1 family protein Nmar_0215.